Reading from the N-terminus, the 465-residue chain is Cerebellar degeneration-related protein 2-like (465 aa).

Coiled-coil stretches lie at residues alanine 31–glutamate 64, alanine 91–leucine 142, and leucine 188–alanine 266. A disordered region spans residues alanine 282–lysine 315. Phosphoserine is present on residues serine 308, serine 318, and serine 344. The stretch at methionine 350–histidine 377 forms a coiled coil. The tract at residues arginine 382 to histidine 421 is disordered. At serine 407 the chain carries Phosphoserine.

It belongs to the CDR2 family.

The sequence is that of Cerebellar degeneration-related protein 2-like (Cdr2l) from Mus musculus (Mouse).